Here is an 840-residue protein sequence, read N- to C-terminus: Radial spoke head 10 homolog B (840 aa).

2 stretches are compositionally biased toward basic and acidic residues: residues 1–16 (MVKEKKKADKKGDKSA) and 51–63 (QPKDPGVKREVKS). The tract at residues 1-74 (MVKEKKKADK…SLPNEDTTQY (74 aa)) is disordered. MORN repeat units lie at residues 86–108 (SYEGEKVRGLYEGEGFAIFQGGC), 109–131 (TYQGMFSEGLMHGQGTYIWADGL), 132–154 (KYEGDFVKNIPMNHGIFTWPDGS), 155–177 (TYEGEVVGGMRHGFGMFKCSTQP), 179–201 (SYIGHWCHGKRHGKGSIYYNQEG), 204–226 (WYEGDWIHNIRKGWGIRCYKSGN), 227–249 (IYEGQWENNVRHGEGRMRWLTTN), 251–273 (EYTGQWKHGVQNGLGTHTWFLKR), 284–306 (EYVGEFVNGYRHGHGKFYYASGA), and 307–329 (MYEGEWVSNKKHGMGRLTFKNGR). Positions 758–801 (KEKVKENRLHNEAMALQRKMENEELEARLNSLREEEAKRQDYEV) form a coiled coil. A disordered region spans residues 810–840 (VDAPSSSFTPSPPKEDTVVSSKSITSKKKKK).

In terms of assembly, interacts with RSPH6A. Does not appear to be part of the axonemal radial spoke complexes 1 or 2.

The protein resides in the cytoplasm. It is found in the cytoskeleton. It localises to the cilium axoneme. Its subcellular location is the cell projection. The protein localises to the cilium. The protein resides in the flagellum. May function as part of the axonemal radial spoke complex 3 (RS3). Radial spoke complexes are important for ciliary motility. The chain is Radial spoke head 10 homolog B (RSPH10B) from Bos taurus (Bovine).